The following is a 265-amino-acid chain: Mlc titration factor A (265 aa).

Histidine 111, histidine 148, histidine 152, and glutamate 211 together coordinate Zn(2+).

It belongs to the MtfA family. Interacts with Mlc. Requires Zn(2+) as cofactor.

Its subcellular location is the cytoplasm. Functionally, involved in the modulation of the activity of the glucose-phosphotransferase system (glucose-PTS). Interacts with the transcriptional repressor Mlc, preventing its interaction with DNA and leading to the modulation of expression of genes regulated by Mlc, including ptsG, which encodes the PTS system glucose-specific EIICB component. In terms of biological role, shows zinc-dependent metallopeptidase activity. The chain is Mlc titration factor A from Salmonella schwarzengrund (strain CVM19633).